Consider the following 127-residue polypeptide: MIRTMMNAKIHRARVTESNLNYVGSITIDSDILEAVDILPNEKVAIVNNNNGARFETYVIAGERGSGKICLNGAASRLVEVGDVVIIMTYAQLNEEEIKNHAPKVAVMNEDNVIIEMIHEKENTIVL.

The active-site Schiff-base intermediate with substrate; via pyruvic acid is the Ser-25. Ser-25 is subject to Pyruvic acid (Ser). Thr-57 provides a ligand contact to substrate. Tyr-58 (proton donor) is an active-site residue. Position 73 to 75 (73 to 75 (GAA)) interacts with substrate.

The protein belongs to the PanD family. In terms of assembly, heterooctamer of four alpha and four beta subunits. It depends on pyruvate as a cofactor. Is synthesized initially as an inactive proenzyme, which is activated by self-cleavage at a specific serine bond to produce a beta-subunit with a hydroxyl group at its C-terminus and an alpha-subunit with a pyruvoyl group at its N-terminus.

The protein resides in the cytoplasm. The catalysed reaction is L-aspartate + H(+) = beta-alanine + CO2. It participates in cofactor biosynthesis; (R)-pantothenate biosynthesis; beta-alanine from L-aspartate: step 1/1. Its function is as follows. Catalyzes the pyruvoyl-dependent decarboxylation of aspartate to produce beta-alanine. The polypeptide is Aspartate 1-decarboxylase (Staphylococcus aureus (strain JH1)).